The following is a 321-amino-acid chain: Pectinesterase (321 aa).

N-acetylthreonine is present on T1. A glycan (N-linked (GlcNAc...) (complex) asparagine) is linked at N75. Substrate is bound by residues T84 and Q114. The Proton donor role is filled by D137. A disulfide bond links C151 and C171. The active-site Nucleophile is D158. Positions 226 and 228 each coordinate substrate. Residues N275, N290, and N319 are each glycosylated (N-linked (GlcNAc...) (complex) asparagine).

This sequence belongs to the pectinesterase family. The N-glycans attached at Asn-75, Asn-275, Asn-290 and Asn-319 are complex oligosaccharides containing xylose, fucose, hexose and N-acetylglucosamine.

It carries out the reaction [(1-&gt;4)-alpha-D-galacturonosyl methyl ester](n) + n H2O = [(1-&gt;4)-alpha-D-galacturonosyl](n) + n methanol + n H(+). It participates in glycan metabolism; pectin degradation; 2-dehydro-3-deoxy-D-gluconate from pectin: step 1/5. Inhibited by PMEI. This chain is Pectinesterase, found in Actinidia deliciosa (Kiwi).